A 333-amino-acid polypeptide reads, in one-letter code: Protein-methionine-sulfoxide reductase catalytic subunit MsrP (333 aa).

Positions 1-43 (MSKQRKLTEADVTPESVFYQRRKVLQALGITAASLALPHNAQA) form a signal peptide, tat-type signal. Mo-molybdopterin contacts are provided by residues Asn-87, 90-91 (YE), Cys-145, Thr-180, Asn-232, Arg-237, and 248-250 (GIK).

It belongs to the MsrP family. As to quaternary structure, heterodimer of a catalytic subunit (MsrP) and a heme-binding subunit (MsrQ). Mo-molybdopterin serves as cofactor. In terms of processing, predicted to be exported by the Tat system. The position of the signal peptide cleavage has not been experimentally proven.

It is found in the periplasm. The catalysed reaction is L-methionyl-[protein] + a quinone + H2O = L-methionyl-(S)-S-oxide-[protein] + a quinol. It carries out the reaction L-methionyl-[protein] + a quinone + H2O = L-methionyl-(R)-S-oxide-[protein] + a quinol. In terms of biological role, part of the MsrPQ system that repairs oxidized periplasmic proteins containing methionine sulfoxide residues (Met-O), using respiratory chain electrons. Thus protects these proteins from oxidative-stress damage caused by reactive species of oxygen and chlorine generated by the host defense mechanisms. MsrPQ is essential for the maintenance of envelope integrity under bleach stress, rescuing a wide series of structurally unrelated periplasmic proteins from methionine oxidation. The catalytic subunit MsrP is non-stereospecific, being able to reduce both (R-) and (S-) diastereoisomers of methionine sulfoxide. The polypeptide is Protein-methionine-sulfoxide reductase catalytic subunit MsrP (Serratia proteamaculans (strain 568)).